A 430-amino-acid chain; its full sequence is Leucoanthocyanidin dioxygenase (430 aa).

A Fe2OG dioxygenase domain is found at 212–311; sequence LLLQMKINYY…RFSWAIFCEP (100 aa). H236, D238, and H292 together coordinate Fe cation. Composition is skewed to basic and acidic residues over residues 376-407 and 415-430; these read KKDN…KEDG and KVFK…EESK. The disordered stretch occupies residues 376–430; the sequence is KKDNQDAVAENKDIKEDEQCGPAEHKDIKEDGQGAAAENKVFKENNQDVAAEESK.

It belongs to the iron/ascorbate-dependent oxidoreductase family. Fe cation serves as cofactor. It depends on L-ascorbate as a cofactor. In terms of tissue distribution, predominantly expressed in corollas and at lower levels in anthers.

The enzyme catalyses a (2R,3S,4S)-leucoanthocyanidin + 2-oxoglutarate + O2 = a 4-H-anthocyanidin with a 3-hydroxy group + succinate + CO2 + 2 H2O. The protein operates within pigment biosynthesis; anthocyanin biosynthesis. In terms of biological role, oxidation of leucoanthocyanidins into anthocyanidins. The sequence is that of Leucoanthocyanidin dioxygenase (ANT17) from Petunia hybrida (Petunia).